A 311-amino-acid chain; its full sequence is MKREELLVEEIKDLTLEELKGYADFYKILDKVYGFTAESVVRGVKILKDMIKEADLRFLSFTANLVSTGLRGLFADLIKQGYFNVIITTGGTIDHDIARSFGGKYYKGLFEYDDSMLRELEIHRLGNILVPMESYGKVIEDVVRKYMNEIVSIKKEWPVYELLWEFGKRISDENSILKAAYEKKVPIIVPGIIDGSFGTNLFIYSQFTQLKLNLFEDMKLIKDLIFSCKKSGALIIGGGISKHHTIWWNQFKDGLDYAIYITTAQEYDGSLSGAKPREAISWNKIKPTSENVVIYGDATIILPILSASLLG.

Lys284 acts as the Nucleophile in catalysis.

The protein belongs to the deoxyhypusine synthase family. It depends on NAD(+) as a cofactor.

It catalyses the reaction [eIF5A protein]-L-lysine + spermidine = [eIF5A protein]-deoxyhypusine + propane-1,3-diamine. The protein operates within protein modification; eIF5A hypusination. In terms of biological role, catalyzes the NAD-dependent oxidative cleavage of spermidine and the subsequent transfer of the butylamine moiety of spermidine to the epsilon-amino group of a specific lysine residue of the eIF-5A precursor protein to form the intermediate deoxyhypusine residue. The protein is Probable deoxyhypusine synthase (dys) of Sulfurisphaera tokodaii (strain DSM 16993 / JCM 10545 / NBRC 100140 / 7) (Sulfolobus tokodaii).